The primary structure comprises 663 residues: Protein associated with UVRAG as autophagy enhancer (663 aa).

2 disordered regions span residues 1–36 (MVSQSSGRQDSPVDPWEGVSDDPGNTDGLPSLLDTE) and 65–136 (DASP…EERA). Composition is skewed to polar residues over residues 80 to 93 (TASNTKSPLGTSPL) and 105 to 130 (PKGTTDSLGSSSAWGTAGNGSDSSVT). An interaction with UVRAG region spans residues 196 to 235 (EAFVLPVDAEKENAHFYVADMIISVMEKMKCNILSQQHTE). Lysine 484, lysine 534, lysine 574, and lysine 634 each carry N6-acetyllysine.

In terms of assembly, interacts with UVRAG; the interaction is direct and promotes association with the PI3K/PI3KC3 and HOPS complexes. Interacts with STX17. Acetylated by KAT5/TIP60 under autophagy induction, promoting autophagosome maturation and lipid metabolism. Lys-484 and Lys-574 constitute the key sites for tuning function in autophagy.

The protein resides in the cytoplasmic vesicle. The protein localises to the autophagosome membrane. In terms of biological role, regulator of autophagy that promotes autophagosome maturation by facilitating the biogenesis of phosphatidylinositol 3-phosphate (PtdIns(3)P) in late steps of autophagy. Acts by antagonizing RUBCN, thereby stimulating phosphatidylinositol 3-kinase activity of the PI3K/PI3KC3 complex. Following anchorage to the autophagosomal SNARE STX17, promotes the recruitment of PI3K/PI3KC3 and HOPS complexes to the autophagosome to regulate the fusion specificity of autophagosomes with late endosomes/lysosomes. Binds phosphoinositides phosphatidylinositol 3-phosphate (PtdIns(3)P), 4-phosphate (PtdIns(4)P) and 5-phosphate (PtdIns(5)P). In addition to its role in autophagy, acts as a regulator of lipid and glycogen homeostasis. May act as a tumor suppressor. The protein is Protein associated with UVRAG as autophagy enhancer of Bos taurus (Bovine).